Reading from the N-terminus, the 366-residue chain is Small ribosomal subunit biogenesis GTPase RsgA (366 aa).

One can recognise a CP-type G domain in the interval 107-266 (RSEGQILAAN…LIDTPGLRGV (160 aa)). Residues 154 to 157 (TKAD) and 208 to 216 (GQSGAGKST) each bind GTP. Residues Cys289, Cys294, His296, and Cys302 each coordinate Zn(2+).

The protein belongs to the TRAFAC class YlqF/YawG GTPase family. RsgA subfamily. As to quaternary structure, monomer. Associates with 30S ribosomal subunit, binds 16S rRNA. Zn(2+) serves as cofactor.

The protein resides in the cytoplasm. One of several proteins that assist in the late maturation steps of the functional core of the 30S ribosomal subunit. Helps release RbfA from mature subunits. May play a role in the assembly of ribosomal proteins into the subunit. Circularly permuted GTPase that catalyzes slow GTP hydrolysis, GTPase activity is stimulated by the 30S ribosomal subunit. This chain is Small ribosomal subunit biogenesis GTPase RsgA, found in Streptomyces coelicolor (strain ATCC BAA-471 / A3(2) / M145).